We begin with the raw amino-acid sequence, 169 residues long: MRTLKIEPLTKEAFAPFGDVIETEGSDYFMINNGSTRRYHKLATVETAQPEDNAIISIFSAEKLEMPLRIRMLERHPLGSQAFIPLLGNPFLVVVAPLGDVPVPGLVRAFLTNGRQGVNYHRGVWHHPVLTIEKRDDFLVVDRSGSGNNCDEHFFTEDEQLLLDPQSNQ.

It belongs to the ureidoglycolate lyase family. Homodimer. Requires Ni(2+) as cofactor.

It catalyses the reaction (S)-ureidoglycolate = urea + glyoxylate. Its pathway is nitrogen metabolism; (S)-allantoin degradation. In terms of biological role, catalyzes the catabolism of the allantoin degradation intermediate (S)-ureidoglycolate, generating urea and glyoxylate. Involved in the utilization of allantoin as nitrogen source. The protein is Ureidoglycolate lyase of Pseudomonas paraeruginosa (strain DSM 24068 / PA7) (Pseudomonas aeruginosa (strain PA7)).